Here is a 234-residue protein sequence, read N- to C-terminus: Ubiquitin domain-containing protein 1 (234 aa).

The disordered stretch occupies residues 1–47; the sequence is MGGCVGTHHDSSGSLNENSDGTGVALGRNQPLKKDKPKWKSDYPMTD. The segment covering 12–21 has biased composition (polar residues); that stretch reads SGSLNENSDG. Basic and acidic residues predominate over residues 32–41; it reads LKKDKPKWKS. The 76-residue stretch at 152-227 folds into the Ubiquitin-like domain; it reads CQLRLRLSTG…VQVIVSQPIP (76 aa).

Its function is as follows. May be involved in the regulation of cellular senescence through a positive feedback loop with TP53. The chain is Ubiquitin domain-containing protein 1 (ubtd1) from Xenopus laevis (African clawed frog).